The primary structure comprises 198 residues: Bcl-2-like protein 11 (198 aa).

Positions 1–72 are disordered; that stretch reads MAKQPSDVSS…PLAPPASPGP (72 aa). At serine 69 the chain carries Phosphoserine; by MAPK. Phosphoserine occurs at positions 77, 87, and 94. The short motif at 148 to 162 is the BH3 element; it reads IAQELRRIGDEFNAY.

It belongs to the Bcl-2 family. In terms of assembly, forms heterodimers with a number of antiapoptotic Bcl-2 proteins, including MCL1, BCL2, BCL2L1 isoform Bcl-X(L), BCL2A1/BFL-1, BHRF1, and BCL2L2/BCLW. Does not heterodimerize with proapoptotic proteins such as BAD, BOK or BAK. Identified in a complex containing BCL2L11, DYNLL1 and BCL2L1 isoform Bcl-X(L); BH3 integrity is required for BCL2L1-binding. Interacts with YWHAZ. When phosphorylated, interacts with TRIM2; this interaction is associated with ubiquitination and degradation. Interacts with MCL1; may sequester BCL2L11 to prevent its pro-apoptotic activity. Interacts with GIMAP5. Interacts with BCL2L10/BCL-B. Interacts (when phosphorylated) with USP27X; the interaction leads to BCL2L11 deubiquitination and stabilization. Interacts with humanin; the interaction prevents BIM-induced apoptosis. As to quaternary structure, does not interact with humanin. In terms of assembly, interacts with BAX; the interaction may lead to BAX activation through conformational change. Does not interact with humanin. Interacts with BAX; the interaction may lead to BAX activation through conformational change. Post-translationally, phosphorylation at Ser-69 by MAPK1/MAPK3 leads to interaction with TRIM2 and polyubiquitination, followed by proteasomal degradation. Deubiquitination catalyzed by USP27X stabilizes the protein. Ubiquitination by TRIM2 following phosphorylation by MAPK1/MAPK3 leads to proteasomal degradation. Conversely, deubiquitination catalyzed by USP27X stabilizes the protein. Isoform BimEL, isoform BimL and isoform BimS are the predominant isoforms and are widely expressed with tissue-specific variation. Isoform Bim-gamma is most abundantly expressed in small intestine and colon, and in lower levels in spleen, prostate, testis, heart, liver and kidney.

Its subcellular location is the endomembrane system. The protein localises to the mitochondrion. Its function is as follows. Induces apoptosis and anoikis. Isoform BimL is more potent than isoform BimEL. Isoform Bim-alpha1, isoform Bim-alpha2 and isoform Bim-alpha3 induce apoptosis, although less potent than isoform BimEL, isoform BimL and isoform BimS. Isoform Bim-gamma induces apoptosis. Isoform Bim-alpha3 induces apoptosis possibly through a caspase-mediated pathway. Isoform BimAC and isoform BimABC lack the ability to induce apoptosis. The protein is Bcl-2-like protein 11 (BCL2L11) of Homo sapiens (Human).